Here is a 903-residue protein sequence, read N- to C-terminus: HTH-type transcriptional regulator MalT (903 aa).

39 to 46 is an ATP binding site; the sequence is CPAGYGKT. In terms of domain architecture, HTH luxR-type spans 832–897; the sequence is ELIRTSPLTQ…DAVQQAQRLL (66 aa). Positions 856-875 form a DNA-binding region, H-T-H motif; that stretch reads NDQIAGELEVAATTIKTHIR.

This sequence belongs to the MalT family. As to quaternary structure, monomer in solution. Oligomerizes to an active state in the presence of the positive effectors ATP and maltotriose.

With respect to regulation, activated by ATP and maltotriose, which are both required for DNA binding. Its function is as follows. Positively regulates the transcription of the maltose regulon whose gene products are responsible for uptake and catabolism of malto-oligosaccharides. Specifically binds to the promoter region of its target genes, recognizing a short DNA motif called the MalT box. The protein is HTH-type transcriptional regulator MalT of Yersinia enterocolitica serotype O:8 / biotype 1B (strain NCTC 13174 / 8081).